Consider the following 104-residue polypeptide: Replication restart protein PriB (104 aa).

Residues 1-101 (MTNRLALSGT…LHAEQIELID (101 aa)) form the SSB domain.

This sequence belongs to the PriB family. As to quaternary structure, homodimer. Interacts with PriA and DnaT. Component of the replication restart primosome. Primosome assembly occurs via a 'hand-off' mechanism. PriA binds to replication forks, subsequently PriB then DnaT bind; DnaT then displaces ssDNA to generate the helicase loading substrate.

In terms of biological role, involved in the restart of stalled replication forks, which reloads the replicative helicase on sites other than the origin of replication; the PriA-PriB pathway is the major replication restart pathway. During primosome assembly it facilitates complex formation between PriA and DnaT on DNA; stabilizes PriA on DNA. Stimulates the DNA unwinding activity of PriA helicase. This is Replication restart protein PriB from Citrobacter koseri (strain ATCC BAA-895 / CDC 4225-83 / SGSC4696).